Consider the following 480-residue polypeptide: Gamma-aminobutyric acid receptor subunit rho-1 (480 aa).

A signal peptide spans 1–21; sequence MLAVQNMKFGIFLLWWGWVLA. The Extracellular segment spans residues 22–281; it reads AESTAHWPGR…LYINFTLRRH (260 aa). The span at 29–38 shows a compositional bias: basic and acidic residues; the sequence is PGREVHEPSR. The segment at 29 to 67 is disordered; it reads PGREVHEPSRKGSRPQRQRRGAHDDAHKQGSPILRRSSD. Residues 39–48 show a composition bias toward basic residues; that stretch reads KGSRPQRQRR. Arg126 is a binding site for 4-aminobutanoate. N-linked (GlcNAc...) asparagine glycosylation is present at Asn141. Residue Ser190 participates in 4-aminobutanoate binding. An intrachain disulfide couples Cys199 to Cys213. Residue Glu218 participates in 4-aminobutanoate binding. 2 N-linked (GlcNAc...) asparagine glycosylation sites follow: Asn235 and Asn275. The helical transmembrane segment at 282–302 threads the bilayer; the sequence is IFFFLLQTYFPATLMVMLSWV. Over 303 to 314 the chain is Cytoplasmic; it reads SFWIDRRAVPAR. The helical transmembrane segment at 315-335 threads the bilayer; it reads VPLGITTVLTMSTIITGVNAS. Over 336 to 346 the chain is Extracellular; sequence MPRVSYIKAVD. A helical membrane pass occupies residues 347–367; sequence IYLWVSFVFVFLSVLEYAAVN. Topologically, residues 368-458 are cytoplasmic; sequence YLTTVQERKE…MRINTHAIDK (91 aa). Residues 459 to 479 form a helical membrane-spanning segment; sequence YSRIIFPAAYILFNLIYWSIF. Position 480 (Ser480) is a topological domain, extracellular.

Belongs to the ligand-gated ion channel (TC 1.A.9) family. Gamma-aminobutyric acid receptor (TC 1.A.9.5) subfamily. GABRR1 sub-subfamily. Three rho subunits (rho-1/GBRR1, rho-2/GBRR2 and rho-3/GBRR3) coassemble either to form functional homopentamers or heteropentamers. Rho-1/GBRR1 subunits can also associate with alpha-1/GBRA1 subunits to form a functional GABAAR. Interacts with SQSTM1. Expressed in the cerebellum.

Its subcellular location is the postsynaptic cell membrane. It localises to the cell membrane. It catalyses the reaction chloride(in) = chloride(out). Inhibited by TPMPA, a rho-specific antagonist, when forming a homopentamer. In contrast with other GABAARs, rho-1 GABAAR is not inhibited by bicuculline when forming a homopentamer. Rho subunit of the pentameric ligand-gated chloride channels responsible for mediating the effects of gamma-aminobutyric acid (GABA), the major inhibitory neurotransmitter in the brain. Rho-containing GABA-gated chloride channels are a subclass of GABA(A) receptors (GABAARs) entirely composed of rho subunits, where GABA molecules bind at the rho intersubunit interfaces. When activated by GABA, rho-GABAARs selectively allow the flow of chloride anions across the cell membrane down their electrochemical gradient. Rho-1 subunits are primarily expressed in retina where rho-1-containing GABAARs play a role in retinal neurotransmission. Rho-1 GABAARs are also involved in neuronal tonic (extrasynaptic) and phasic (synaptic) transmission in the Purkinje neurons of the cerebellum. Rho-1 GABAARs may also contribute to the regulation of glial development in the cerebellum by controlling extrasynaptic transmission. This chain is Gamma-aminobutyric acid receptor subunit rho-1, found in Mus musculus (Mouse).